Here is a 205-residue protein sequence, read N- to C-terminus: N-(5'-phosphoribosyl)anthranilate isomerase (205 aa).

It belongs to the TrpF family.

It carries out the reaction N-(5-phospho-beta-D-ribosyl)anthranilate = 1-(2-carboxyphenylamino)-1-deoxy-D-ribulose 5-phosphate. It functions in the pathway amino-acid biosynthesis; L-tryptophan biosynthesis; L-tryptophan from chorismate: step 3/5. The polypeptide is N-(5'-phosphoribosyl)anthranilate isomerase (Thiobacillus denitrificans (strain ATCC 25259 / T1)).